The primary structure comprises 338 residues: Glycerol-3-phosphate dehydrogenase [NAD(P)+] (338 aa).

Residues Ser-14, Tyr-15, His-35, and Lys-109 each contribute to the NADPH site. Residues Lys-109, Gly-138, and Thr-140 each coordinate sn-glycerol 3-phosphate. Residue Ala-142 coordinates NADPH. Sn-glycerol 3-phosphate is bound by residues Lys-194, Asp-247, Ser-257, Arg-258, and Asn-259. Lys-194 (proton acceptor) is an active-site residue. Position 258 (Arg-258) interacts with NADPH. Val-282 and Glu-284 together coordinate NADPH.

The protein belongs to the NAD-dependent glycerol-3-phosphate dehydrogenase family.

It localises to the cytoplasm. The enzyme catalyses sn-glycerol 3-phosphate + NAD(+) = dihydroxyacetone phosphate + NADH + H(+). It catalyses the reaction sn-glycerol 3-phosphate + NADP(+) = dihydroxyacetone phosphate + NADPH + H(+). It participates in membrane lipid metabolism; glycerophospholipid metabolism. In terms of biological role, catalyzes the reduction of the glycolytic intermediate dihydroxyacetone phosphate (DHAP) to sn-glycerol 3-phosphate (G3P), the key precursor for phospholipid synthesis. This Shewanella putrefaciens (strain CN-32 / ATCC BAA-453) protein is Glycerol-3-phosphate dehydrogenase [NAD(P)+].